The primary structure comprises 211 residues: Urease accessory protein UreG (211 aa).

Position 12–19 (12–19 (GPVGAGKT)) interacts with GTP.

The protein belongs to the SIMIBI class G3E GTPase family. UreG subfamily. Homodimer. UreD, UreF and UreG form a complex that acts as a GTP-hydrolysis-dependent molecular chaperone, activating the urease apoprotein by helping to assemble the nickel containing metallocenter of UreC. The UreE protein probably delivers the nickel.

It localises to the cytoplasm. In terms of biological role, facilitates the functional incorporation of the urease nickel metallocenter. This process requires GTP hydrolysis, probably effectuated by UreG. The polypeptide is Urease accessory protein UreG (Paracoccus denitrificans (strain Pd 1222)).